The sequence spans 251 residues: Small ribosomal subunit protein uS2 (251 aa).

The protein belongs to the universal ribosomal protein uS2 family.

In Chlorobium chlorochromatii (strain CaD3), this protein is Small ribosomal subunit protein uS2.